The primary structure comprises 70 residues: Cytochrome c oxidase subunit 8B, mitochondrial (70 aa).

The transit peptide at 1-24 directs the protein to the mitochondrion; the sequence is MPRLPPALRLLQPPLRCWVVPKLH. The Mitochondrial matrix portion of the chain corresponds to 25–35; it reads VSAKPARTPTS. Residues 36–59 traverse the membrane as a helical segment; it reads PAEQAVGLSMMFLSFLVPAGWVLS. The Mitochondrial intermembrane segment spans residues 60–70; it reads HLESYKKSSTA.

This sequence belongs to the cytochrome c oxidase VIII family. In terms of assembly, component of the cytochrome c oxidase (complex IV, CIV), a multisubunit enzyme composed of 14 subunits. The complex is composed of a catalytic core of 3 subunits MT-CO1, MT-CO2 and MT-CO3, encoded in the mitochondrial DNA, and 11 supernumerary subunits COX4I, COX5A, COX5B, COX6A, COX6B, COX6C, COX7A, COX7B, COX7C, COX8 and NDUFA4, which are encoded in the nuclear genome. The complex exists as a monomer or a dimer and forms supercomplexes (SCs) in the inner mitochondrial membrane with NADH-ubiquinone oxidoreductase (complex I, CI) and ubiquinol-cytochrome c oxidoreductase (cytochrome b-c1 complex, complex III, CIII), resulting in different assemblies (supercomplex SCI(1)III(2)IV(1) and megacomplex MCI(2)III(2)IV(2)).

It is found in the mitochondrion inner membrane. Its pathway is energy metabolism; oxidative phosphorylation. Its function is as follows. Component of the cytochrome c oxidase, the last enzyme in the mitochondrial electron transport chain which drives oxidative phosphorylation. The respiratory chain contains 3 multisubunit complexes succinate dehydrogenase (complex II, CII), ubiquinol-cytochrome c oxidoreductase (cytochrome b-c1 complex, complex III, CIII) and cytochrome c oxidase (complex IV, CIV), that cooperate to transfer electrons derived from NADH and succinate to molecular oxygen, creating an electrochemical gradient over the inner membrane that drives transmembrane transport and the ATP synthase. Cytochrome c oxidase is the component of the respiratory chain that catalyzes the reduction of oxygen to water. Electrons originating from reduced cytochrome c in the intermembrane space (IMS) are transferred via the dinuclear copper A center (CU(A)) of subunit 2 and heme A of subunit 1 to the active site in subunit 1, a binuclear center (BNC) formed by heme A3 and copper B (CU(B)). The BNC reduces molecular oxygen to 2 water molecules using 4 electrons from cytochrome c in the IMS and 4 protons from the mitochondrial matrix. The polypeptide is Cytochrome c oxidase subunit 8B, mitochondrial (COX8B) (Eulemur fulvus fulvus (Brown lemur)).